The following is a 232-amino-acid chain: Ribose-5-phosphate isomerase A (232 aa).

Substrate-binding positions include 28–31, 83–86, and 96–99; these read TGST, DGAD, and KGGG. E105 functions as the Proton acceptor in the catalytic mechanism. Position 123 (K123) interacts with substrate.

Belongs to the ribose 5-phosphate isomerase family. As to quaternary structure, homodimer.

The enzyme catalyses aldehydo-D-ribose 5-phosphate = D-ribulose 5-phosphate. It participates in carbohydrate degradation; pentose phosphate pathway; D-ribose 5-phosphate from D-ribulose 5-phosphate (non-oxidative stage): step 1/1. Catalyzes the reversible conversion of ribose-5-phosphate to ribulose 5-phosphate. This is Ribose-5-phosphate isomerase A from Nitrobacter hamburgensis (strain DSM 10229 / NCIMB 13809 / X14).